A 361-amino-acid polypeptide reads, in one-letter code: Outer mitochondrial transmembrane helix translocase (361 aa).

At 1 to 15 (MVHAETFSRPLSRNE) the chain is on the mitochondrial intermembrane side. The helical transmembrane segment at 16–32 (VVGLIFRLTIFGAVTYF) threads the bilayer. The Cytoplasmic portion of the chain corresponds to 33–361 (TIKWMVDAID…QNVLTHVCLD (329 aa)). 133–140 (GPPGCGKT) serves as a coordination point for ATP. Ser322 is subject to Phosphoserine.

It belongs to the AAA ATPase family. MSP1 subfamily. As to quaternary structure, interacts with GRIA2 and GRIP1 in an ATP-dependent manner. ATAD1-catalyzed ATP hydrolysis disrupts not only its binding to GRIA2 and GRIP1, but also interaction between GRIP1 and GRIA2, leading to AMPAR complex disassembly.

The protein localises to the mitochondrion outer membrane. The protein resides in the peroxisome membrane. Its subcellular location is the postsynaptic cell membrane. The enzyme catalyses [protein]-with a C-terminal TM segment(out) + ATP + H2O = [protein]-with a C-terminal TM segment(in) + ADP + phosphate + H(+). In terms of biological role, outer mitochondrial translocase required to remove mislocalized tail-anchored transmembrane proteins on mitochondria. Specifically recognizes and binds tail-anchored transmembrane proteins: acts as a dislocase that mediates the ATP-dependent extraction of mistargeted tail-anchored transmembrane proteins from the mitochondrion outer membrane. Also plays a critical role in regulating the surface expression of AMPA receptors (AMPAR), thereby regulating synaptic plasticity and learning and memory. Required for NMDA-stimulated AMPAR internalization and inhibition of GRIA1 and GRIA2 recycling back to the plasma membrane; these activities are ATPase-dependent. This Bos taurus (Bovine) protein is Outer mitochondrial transmembrane helix translocase.